The primary structure comprises 615 residues: Elongation factor 4 (615 aa).

A tr-type G domain is found at 14–196 (AMIRNFCIIA…EIVRQVPAPV (183 aa)). Residues 26–31 (DHGKST) and 143–146 (NKID) each bind GTP.

It belongs to the TRAFAC class translation factor GTPase superfamily. Classic translation factor GTPase family. LepA subfamily.

It is found in the cell membrane. It carries out the reaction GTP + H2O = GDP + phosphate + H(+). Functionally, required for accurate and efficient protein synthesis under certain stress conditions. May act as a fidelity factor of the translation reaction, by catalyzing a one-codon backward translocation of tRNAs on improperly translocated ribosomes. Back-translocation proceeds from a post-translocation (POST) complex to a pre-translocation (PRE) complex, thus giving elongation factor G a second chance to translocate the tRNAs correctly. Binds to ribosomes in a GTP-dependent manner. In Frankia alni (strain DSM 45986 / CECT 9034 / ACN14a), this protein is Elongation factor 4.